The chain runs to 434 residues: Tol-Pal system protein TolB (434 aa).

Residues 1–21 (MIVRRALALAALALAASPALA) form the signal peptide. The disordered stretch occupies residues 411 to 434 (GDRQTPVTSGKTDLAAPAWGPLAP).

The protein belongs to the TolB family. As to quaternary structure, the Tol-Pal system is composed of five core proteins: the inner membrane proteins TolA, TolQ and TolR, the periplasmic protein TolB and the outer membrane protein Pal. They form a network linking the inner and outer membranes and the peptidoglycan layer.

The protein localises to the periplasm. Part of the Tol-Pal system, which plays a role in outer membrane invagination during cell division and is important for maintaining outer membrane integrity. The chain is Tol-Pal system protein TolB from Anaeromyxobacter dehalogenans (strain 2CP-C).